We begin with the raw amino-acid sequence, 209 residues long: ATP synthase subunit b 2 (209 aa).

Residues W9–F29 form a helical membrane-spanning segment.

This sequence belongs to the ATPase B chain family. As to quaternary structure, F-type ATPases have 2 components, F(1) - the catalytic core - and F(0) - the membrane proton channel. F(1) has five subunits: alpha(3), beta(3), gamma(1), delta(1), epsilon(1). F(0) has three main subunits: a(1), b(2) and c(10-14). The alpha and beta chains form an alternating ring which encloses part of the gamma chain. F(1) is attached to F(0) by a central stalk formed by the gamma and epsilon chains, while a peripheral stalk is formed by the delta and b chains.

It is found in the cell inner membrane. Its function is as follows. F(1)F(0) ATP synthase produces ATP from ADP in the presence of a proton or sodium gradient. F-type ATPases consist of two structural domains, F(1) containing the extramembraneous catalytic core and F(0) containing the membrane proton channel, linked together by a central stalk and a peripheral stalk. During catalysis, ATP synthesis in the catalytic domain of F(1) is coupled via a rotary mechanism of the central stalk subunits to proton translocation. Component of the F(0) channel, it forms part of the peripheral stalk, linking F(1) to F(0). The polypeptide is ATP synthase subunit b 2 (Desulfosudis oleivorans (strain DSM 6200 / JCM 39069 / Hxd3) (Desulfococcus oleovorans)).